A 485-amino-acid chain; its full sequence is 3-isopropylmalate dehydratase large subunit (485 aa).

Disordered stretches follow at residues 1–20 (MSDA…QSTG) and 73–92 (PERT…RSLP). Residues Cys364, Cys424, and Cys427 each contribute to the [4Fe-4S] cluster site.

This sequence belongs to the aconitase/IPM isomerase family. LeuC type 1 subfamily. Heterodimer of LeuC and LeuD. [4Fe-4S] cluster is required as a cofactor.

It catalyses the reaction (2R,3S)-3-isopropylmalate = (2S)-2-isopropylmalate. The protein operates within amino-acid biosynthesis; L-leucine biosynthesis; L-leucine from 3-methyl-2-oxobutanoate: step 2/4. Functionally, catalyzes the isomerization between 2-isopropylmalate and 3-isopropylmalate, via the formation of 2-isopropylmaleate. The protein is 3-isopropylmalate dehydratase large subunit of Rhodopirellula baltica (strain DSM 10527 / NCIMB 13988 / SH1).